Reading from the N-terminus, the 556-residue chain is Formate--tetrahydrofolate ligase (556 aa).

An ATP-binding site is contributed by 65-72 (TPAGEGKT).

This sequence belongs to the formate--tetrahydrofolate ligase family.

The enzyme catalyses (6S)-5,6,7,8-tetrahydrofolate + formate + ATP = (6R)-10-formyltetrahydrofolate + ADP + phosphate. It functions in the pathway one-carbon metabolism; tetrahydrofolate interconversion. In Heliobacterium modesticaldum (strain ATCC 51547 / Ice1), this protein is Formate--tetrahydrofolate ligase.